Here is a 419-residue protein sequence, read N- to C-terminus: Inner ear-specific collagen (419 aa).

The N-terminal stretch at 1 to 19 (MDAYSLSPTDSTTYSSDTF) is a signal peptide. The nonhelical region (NC2) stretch occupies residues 20-57 (STEFHTDAIAPPGNTPGNYTLDYNECFFNFCECCPPEK). An N-linked (GlcNAc...) asparagine glycan is attached at N37. The triple-helical region (COL1) stretch occupies residues 58-274 (GPMGPMGERG…RGPKGPPGES (217 aa)). Positions 63 to 275 (MGERGLPGPP…GPKGPPGESV (213 aa)) are disordered. Basic and acidic residues-rich tracts occupy residues 129 to 144 (PGEK…KGER) and 184 to 202 (LKGE…KGER). The segment covering 227-236 (GPLGGKGDTG) has biased composition (gly residues). Residues 275–412 (VEQIRSAFSV…GFLLYPDTKK (138 aa)) enclose the C1q domain. The segment at 275-419 (VEQIRSAFSV…TKKPTAMENL (145 aa)) is nonhelical region (NC1). Residue N320 is glycosylated (N-linked (GlcNAc...) asparagine).

Specialized secretory supporting cells at the outer perimeter of the saccular epithelium.

The protein resides in the secreted. The protein localises to the extracellular space. It is found in the extracellular matrix. Its function is as follows. Forms a microstructural matrix within the otolithic membrane. This is Inner ear-specific collagen from Lepomis macrochirus (Bluegill).